The chain runs to 149 residues: Transcriptional repressor NrdR (149 aa).

The segment at 3-34 is a zinc-finger region; that stretch reads CPFCGFEESKVVDSRSTDDNTTIRRRRECLKC. The region spanning 49–139 is the ATP-cone domain; sequence ILVIKKDLTR…VYRQFKDIDT (91 aa).

This sequence belongs to the NrdR family. Zn(2+) is required as a cofactor.

Negatively regulates transcription of bacterial ribonucleotide reductase nrd genes and operons by binding to NrdR-boxes. This Clostridium beijerinckii (strain ATCC 51743 / NCIMB 8052) (Clostridium acetobutylicum) protein is Transcriptional repressor NrdR.